A 336-amino-acid chain; its full sequence is Cell division protein ZipA (336 aa).

Residues 1–6 are Periplasmic-facing; the sequence is MMQDLR. A helical membrane pass occupies residues 7–27; that stretch reads LILIVVGAIAIIALLLHGLWT. Residues 28-336 are Cytoplasmic-facing; it reads SRKERSSLFR…RIRDVLKANA (309 aa). The segment covering 40 to 51 has biased composition (basic and acidic residues); it reads PVKRAKKARDET. The disordered stretch occupies residues 40 to 190; that stretch reads PVKRAKKARD…APAQPQQPAE (151 aa). A compositionally biased stretch (low complexity) spans 76-89; sequence SFSSSSFDNASFDN. Over residues 126–138 the composition is skewed to polar residues; that stretch reads PRSQVRGDSNPQV. Positions 179–190 are enriched in low complexity; the sequence is QPAPAQPQQPAE.

This sequence belongs to the ZipA family. In terms of assembly, interacts with FtsZ via their C-terminal domains.

The protein localises to the cell inner membrane. Functionally, essential cell division protein that stabilizes the FtsZ protofilaments by cross-linking them and that serves as a cytoplasmic membrane anchor for the Z ring. Also required for the recruitment to the septal ring of downstream cell division proteins. The protein is Cell division protein ZipA of Pectobacterium carotovorum subsp. carotovorum (strain PC1).